Consider the following 735-residue polypeptide: Alpha-adducin (735 aa).

Met1 is modified (N-acetylmethionine). Positions 1–11 (MNGDTRAAVVT) are enriched in low complexity. The interval 1-21 (MNGDTRAAVVTSPPPTTAPHK) is disordered. Ser12 is subject to Phosphoserine. Residue Ser59 is modified to Phosphoserine; by PKA. Position 64 is a phosphoserine (Ser64). Thr331 carries the post-translational modification Phosphothreonine. Phosphoserine occurs at positions 334, 353, and 355. The residue at position 358 (Thr358) is a Phosphothreonine. Residues Ser364 and Ser366 each carry the phosphoserine modification. A Phosphoserine; by PKA modification is found at Ser408. Disordered stretches follow at residues 418–486 (GHSF…SAVP) and 576–735 (RREV…KSDS). Ser427 is modified (phosphoserine). At Thr429 the chain carries Phosphothreonine. Residue Ser431 is modified to Phosphoserine. Position 436 is a phosphoserine; by PKA (Ser436). Residue Thr445 is modified to Phosphothreonine; by ROCK2. Ser464 and Ser465 each carry phosphoserine. The residue at position 480 (Thr480) is a Phosphothreonine; by ROCK2. Position 481 is a phosphoserine; by PKA (Ser481). Basic and acidic residues predominate over residues 576–601 (RREVERKQKGSEENLDETREQKEKSP). A phosphoserine mark is found at Ser586, Ser600, and Ser605. Position 610 is a phosphothreonine (Thr610). Position 613 is a phosphoserine (Ser613). Position 614 is a phosphothreonine (Thr614). The span at 678–712 (EPASASAPGAEEVASPATEEGSPMDPGSDGSPGKS) shows a compositional bias: low complexity. 3 positions are modified to phosphoserine: Ser705, Ser708, and Ser712. Residues 713-735 (PSKKKKKFRTPSFLKKSKKKSDS) show a composition bias toward basic residues. Ser714 is modified (phosphoserine; by PKC). An interaction with calmodulin region spans residues 715-732 (KKKKKFRTPSFLKKSKKK). Ser724 carries the post-translational modification Phosphoserine; by PKA and PKC.

This sequence belongs to the aldolase class II family. Adducin subfamily. Heterodimer of an alpha and a beta subunit or an alpha and a gamma subunit.

It is found in the cytoplasm. The protein localises to the cytoskeleton. The protein resides in the cell membrane. Membrane-cytoskeleton-associated protein that promotes the assembly of the spectrin-actin network. Binds to calmodulin. This Rattus norvegicus (Rat) protein is Alpha-adducin (Add1).